The following is a 75-amino-acid chain: Putative antitoxin PH1062.1 (75 aa).

It belongs to the UPF0330 family.

Its function is as follows. Possibly the antitoxin component of a type II toxin-antitoxin (TA) system. This is Putative antitoxin PH1062.1 from Pyrococcus horikoshii (strain ATCC 700860 / DSM 12428 / JCM 9974 / NBRC 100139 / OT-3).